Reading from the N-terminus, the 445-residue chain is E3 ubiquitin-protein ligase MYLIP (445 aa).

The FERM domain maps to 1–279 (MLCYVTRPDA…ETHAFYRCDT (279 aa)). A disordered region spans residues 341–363 (RNDQSPPSSPLKSSDSSMSCSSC). The segment covering 350-363 (PLKSSDSSMSCSSC) has biased composition (low complexity). Residues Cys-360, Cys-363, and Cys-368 each contribute to the Fe cation site. Residues 387-422 (CMVCCEEEINSTFCPCGHTVCCESCAAQLQSCPVCR) form an RING-type zinc finger. The critical for homodimerization stretch occupies residues 431–433 (VYL).

Homodimer. Interacts with the E2 ubiquitin-conjugating enzyme, UBE2D1 (via RING-type zinc finger). Interacts with myosin regulatory light chain (MRLC) and TMEM4. Post-translationally, autoubiquitinated. In terms of tissue distribution, expressed in developing and adult brain, hippocampus, cerebellum, cerebral cortex, thalamus and substantia nigra. Predominantly found in neurons.

It localises to the cytoplasm. It is found in the cell membrane. The enzyme catalyses S-ubiquitinyl-[E2 ubiquitin-conjugating enzyme]-L-cysteine + [acceptor protein]-L-lysine = [E2 ubiquitin-conjugating enzyme]-L-cysteine + N(6)-ubiquitinyl-[acceptor protein]-L-lysine.. It functions in the pathway protein modification; protein ubiquitination. With respect to regulation, can bind 1 iron ion per dimer. Iron binding seems to decrease LDLR degradation activity. E3 ubiquitin-protein ligase that mediates ubiquitination and subsequent proteasomal degradation of myosin regulatory light chain (MRLC), LDLR, VLDLR and LRP8. Activity depends on E2 enzymes of the UBE2D family. Proteasomal degradation of MRLC leads to inhibit neurite outgrowth in presence of NGF by counteracting the stabilization of MRLC by saposin-like protein (CNPY2/MSAP) and reducing CNPY2-stimulated neurite outgrowth. Acts as a sterol-dependent inhibitor of cellular cholesterol uptake by mediating ubiquitination and subsequent degradation of LDLR. The chain is E3 ubiquitin-protein ligase MYLIP (Mylip) from Rattus norvegicus (Rat).